We begin with the raw amino-acid sequence, 159 residues long: Phosphopantetheine adenylyltransferase (159 aa).

Position 10 (threonine 10) interacts with substrate. Residues 10–11 and histidine 18 each bind ATP; that span reads TF. 3 residues coordinate substrate: lysine 42, leucine 74, and arginine 88. ATP contacts are provided by residues 89–91, glutamate 99, and 124–130; these read GMR and WSYVSST.

The protein belongs to the bacterial CoaD family. In terms of assembly, homohexamer. The cofactor is Mg(2+).

The protein localises to the cytoplasm. It carries out the reaction (R)-4'-phosphopantetheine + ATP + H(+) = 3'-dephospho-CoA + diphosphate. It participates in cofactor biosynthesis; coenzyme A biosynthesis; CoA from (R)-pantothenate: step 4/5. Reversibly transfers an adenylyl group from ATP to 4'-phosphopantetheine, yielding dephospho-CoA (dPCoA) and pyrophosphate. This chain is Phosphopantetheine adenylyltransferase, found in Mannheimia succiniciproducens (strain KCTC 0769BP / MBEL55E).